The chain runs to 182 residues: NADH-quinone oxidoreductase subunit B (182 aa).

Positions 46, 47, 112, and 141 each coordinate [4Fe-4S] cluster.

Belongs to the complex I 20 kDa subunit family. NDH-1 is composed of 14 different subunits. Subunits NuoB, C, D, E, F, and G constitute the peripheral sector of the complex. Requires [4Fe-4S] cluster as cofactor.

It localises to the cell inner membrane. It catalyses the reaction a quinone + NADH + 5 H(+)(in) = a quinol + NAD(+) + 4 H(+)(out). Its function is as follows. NDH-1 shuttles electrons from NADH, via FMN and iron-sulfur (Fe-S) centers, to quinones in the respiratory chain. The immediate electron acceptor for the enzyme in this species is believed to be a menaquinone. Couples the redox reaction to proton translocation (for every two electrons transferred, four hydrogen ions are translocated across the cytoplasmic membrane), and thus conserves the redox energy in a proton gradient. This is NADH-quinone oxidoreductase subunit B from Flavobacterium johnsoniae (strain ATCC 17061 / DSM 2064 / JCM 8514 / BCRC 14874 / CCUG 350202 / NBRC 14942 / NCIMB 11054 / UW101) (Cytophaga johnsonae).